A 1025-amino-acid chain; its full sequence is Beta-galactosidase (1025 aa).

The active-site Proton donor is Glu-482. Residue Glu-551 is the Nucleophile of the active site.

This sequence belongs to the glycosyl hydrolase 2 family.

The enzyme catalyses Hydrolysis of terminal non-reducing beta-D-galactose residues in beta-D-galactosides.. This chain is Beta-galactosidase (LAC4), found in Kluyveromyces lactis (strain ATCC 8585 / CBS 2359 / DSM 70799 / NBRC 1267 / NRRL Y-1140 / WM37) (Yeast).